The chain runs to 904 residues: Endoplasmic reticulum metallopeptidase 1 (904 aa).

Met-1 bears the N-acetylmethionine mark. At 1–63 (MEWGSESAAV…PGGSGGASRG (63 aa)) the chain is on the cytoplasmic side. A disordered region spans residues 1 to 65 (MEWGSESAAV…GSGGASRGAG (65 aa)). The span at 55–65 (GGSGGASRGAG) shows a compositional bias: gly residues. A helical membrane pass occupies residues 64–84 (AGTGLSEVRAALGLALYLIAL). At 85–399 (RTLVQLSLQQ…AASKYRHGNM (315 aa)) the chain is on the lumenal side. N-linked (GlcNAc...) asparagine glycosylation occurs at Asn-182. A disulfide bond links Cys-204 and Cys-222. His-205 and Asp-217 together coordinate Zn(2+). Glu-251 acts as the Proton acceptor in catalysis. Zn(2+) is bound by residues Glu-252, Glu-278, and His-354. The chain crosses the membrane as a helical span at residues 400-420 (VFFDVLGLFVIAYPSRIGSII). Over 421–457 (NYMVVMGVVLYLGKKFLQPKHKTGNYKKDFLCGLGIT) the chain is Cytoplasmic. Residues 458 to 478 (LISWFTSLVTVLIIAVFISLI) form a helical membrane-spanning segment. Residues 479–489 (GQSLSWYNHFY) are Lumenal-facing. A helical membrane pass occupies residues 490-510 (VSVCLYGTATVAKIILIHTLA). Residues 511–519 (KRFYYMNAS) lie on the Cytoplasmic side of the membrane. The chain crosses the membrane as a helical span at residues 520–540 (AQYLGEVFFDISLFVHCCFLV). Position 541 (Thr-541) is a topological domain, lumenal. The chain crosses the membrane as a helical span at residues 542-562 (LTYQGLCSAFISAVWVAFPLL). The Cytoplasmic segment spans residues 563 to 579 (TKLCVHKDFKQHGAQGK). The chain crosses the membrane as a helical span at residues 580–600 (FIAFYLLGMFIPYLYALYLIW). Residues 601–621 (AVFEMFTPILGRSGSEIPPDV) are Lumenal-facing. A helical membrane pass occupies residues 622 to 642 (VLASILAGCTMILSSYFINFI). The Cytoplasmic portion of the chain corresponds to 643 to 651 (YLAKSTKKT). The chain crosses the membrane as a helical span at residues 652-672 (MLTLTLVCAITFLLVCSGTFF). Residues 673–904 (PYSSNPANPK…WVCTYDLFVF (232 aa)) are Lumenal-facing. N-linked (GlcNAc...) asparagine glycosylation occurs at Asn-730.

It belongs to the peptidase M28 family. Requires Zn(2+) as cofactor.

It localises to the endoplasmic reticulum membrane. Functionally, within the ovary, required for the organization of somatic cells and oocytes into discrete follicular structures. The sequence is that of Endoplasmic reticulum metallopeptidase 1 from Homo sapiens (Human).